Reading from the N-terminus, the 91-residue chain is Mercuric transport protein periplasmic component (91 aa).

The N-terminal stretch at 1 to 19 (MKKLFASLAIAAVVAPVWA) is a signal peptide. One can recognise an HMA domain in the interval 22–88 (QTVTLSVPGM…ATEDAGYPSS (67 aa)). The Hg(2+) site is built by C33 and C36.

It belongs to the MerP family. In terms of assembly, monomer.

The protein resides in the periplasm. Its function is as follows. Involved in mercury resistance. Acts as a mercury scavenger that specifically binds to a mercuric ion in the periplasm and probably passes it to the cytoplasmic mercuric reductase MerA via the mercuric transport protein MerT. The sequence is that of Mercuric transport protein periplasmic component from Serratia marcescens.